The chain runs to 338 residues: Putative ankyrin repeat protein CBU_0781 (338 aa).

The tract at residues 1–31 is disordered; the sequence is MSRRETPTSTISSTPTGTRTPRRRLSRKGHP. Over residues 7–19 the composition is skewed to low complexity; that stretch reads PTSTISSTPTGTR. Basic residues predominate over residues 20–31; it reads TPRRRLSRKGHP. ANK repeat units lie at residues 92–124 and 125–157; these read QGDT…IVNK and LGET…IKYK. The stretch at 197–242 forms a coiled coil; it reads SQIMASDKEIDEIIRNARNLQIIKKEKREAEERARTKKSKQITLQR. Positions 319–338 are disordered; the sequence is KKEDTTLSRNNSLSCLSSPR. Residues 325–338 are compositionally biased toward low complexity; it reads LSRNNSLSCLSSPR.

The protein is Putative ankyrin repeat protein CBU_0781 of Coxiella burnetii (strain RSA 493 / Nine Mile phase I).